Reading from the N-terminus, the 255-residue chain is 3-dehydroquinate dehydratase (255 aa).

3-dehydroquinate-binding positions include 46-48 (EWR) and R82. The Proton donor/acceptor role is filled by H143. K170 (schiff-base intermediate with substrate) is an active-site residue. The 3-dehydroquinate site is built by R213, S232, and Q236.

This sequence belongs to the type-I 3-dehydroquinase family. Homodimer.

The catalysed reaction is 3-dehydroquinate = 3-dehydroshikimate + H2O. Its pathway is metabolic intermediate biosynthesis; chorismate biosynthesis; chorismate from D-erythrose 4-phosphate and phosphoenolpyruvate: step 3/7. In terms of biological role, involved in the third step of the chorismate pathway, which leads to the biosynthesis of aromatic amino acids. Catalyzes the cis-dehydration of 3-dehydroquinate (DHQ) and introduces the first double bond of the aromatic ring to yield 3-dehydroshikimate. This is 3-dehydroquinate dehydratase from Bacillus subtilis (strain 168).